Consider the following 442-residue polypeptide: Metacaspase-5 (442 aa).

Positions 1–18 (MDLLLGVLSSGILQNALP) are cleaved as a signal peptide. Residues 19–62 (FVAGVGRVKRPKRVKLEEAFREAHLCRPVIPYRAPTPYTGGRVK) form an important for catalytic activity region. N-linked (GlcNAc...) asparagine glycans are attached at residues Asn-69 and Asn-112. The active site involves His-146. Ca(2+) is bound by residues Asp-161, Asp-177, and Asp-178. Cys-201 is a catalytic residue. A Ca(2+)-binding site is contributed by Asp-208. 4 N-linked (GlcNAc...) asparagine glycosylation sites follow: Asn-234, Asn-257, Asn-282, and Asn-331. The interval 336–442 (HYVPQQYLQP…QYLSGVGKPL (107 aa)) is negatively regulates catalytic activity. Positions 348–371 (PPQPYYPPPQPQQPYYPPPQPQQP) are enriched in pro residues. Positions 348–442 (PPQPYYPPPQ…QYLSGVGKPL (95 aa)) are disordered. The span at 372–382 (YYPSSQLPTQY) shows a compositional bias: low complexity. A compositionally biased stretch (polar residues) spans 422-434 (PSDQSTYYSSAQY).

The protein belongs to the peptidase C14B family. In epimastigotes, the unprocessed enzyme appears to be the main form. Auto-processing is dispensable for catalytic activity towards small oligopeptide substrates.

The protein localises to the recycling endosome. With respect to regulation, activated by Ca(2+). Its function is as follows. Cysteine protease that cleaves specifically after arginine or lysine residues. May play a role in apoptosis. The chain is Metacaspase-5 from Trypanosoma cruzi (strain CL Brener).